A 59-amino-acid chain; its full sequence is Large ribosomal subunit protein bL32 (59 aa).

The tract at residues 1-59 (MAVQQNKKSPSKRGMHRSHDFLTNPPLAVEPTSGEIHLRHHVSPNGYYRGRKVLPAKGE) is disordered. The segment covering 49 to 59 (RGRKVLPAKGE) has biased composition (basic residues).

The protein belongs to the bacterial ribosomal protein bL32 family.

The chain is Large ribosomal subunit protein bL32 from Methylobacillus flagellatus (strain ATCC 51484 / DSM 6875 / VKM B-1610 / KT).